Consider the following 219-residue polypeptide: Ribose-5-phosphate isomerase A (219 aa).

Residues 28–31 (SGST), 81–84 (DGAD), and 94–97 (KGGG) contribute to the substrate site. Residue Glu-103 is the Proton acceptor of the active site. Lys-121 serves as a coordination point for substrate.

Belongs to the ribose 5-phosphate isomerase family. Homodimer.

It catalyses the reaction aldehydo-D-ribose 5-phosphate = D-ribulose 5-phosphate. The protein operates within carbohydrate degradation; pentose phosphate pathway; D-ribose 5-phosphate from D-ribulose 5-phosphate (non-oxidative stage): step 1/1. In terms of biological role, catalyzes the reversible conversion of ribose-5-phosphate to ribulose 5-phosphate. This Haemophilus ducreyi (strain 35000HP / ATCC 700724) protein is Ribose-5-phosphate isomerase A.